A 336-amino-acid polypeptide reads, in one-letter code: 3-isopropylmalate dehydrogenase (336 aa).

The substrate site is built by arginine 87, arginine 97, arginine 121, and aspartate 211. Mg(2+) contacts are provided by aspartate 211, aspartate 235, and aspartate 239. 271 to 283 lines the NAD(+) pocket; that stretch reads GSAPDIAGQGIAD.

The protein belongs to the isocitrate and isopropylmalate dehydrogenases family. LeuB type 2 subfamily. In terms of assembly, homodimer. It depends on Mg(2+) as a cofactor. Requires Mn(2+) as cofactor.

It localises to the cytoplasm. The catalysed reaction is (2R,3S)-3-isopropylmalate + NAD(+) = 4-methyl-2-oxopentanoate + CO2 + NADH. It participates in amino-acid biosynthesis; L-leucine biosynthesis; L-leucine from 3-methyl-2-oxobutanoate: step 3/4. Functionally, catalyzes the oxidation of 3-carboxy-2-hydroxy-4-methylpentanoate (3-isopropylmalate) to 3-carboxy-4-methyl-2-oxopentanoate. The product decarboxylates to 4-methyl-2 oxopentanoate. The chain is 3-isopropylmalate dehydrogenase from Rhodococcus jostii (strain RHA1).